The sequence spans 326 residues: Type II secretion system protein K (326 aa).

The propeptide at 1–7 is leader sequence; that stretch reads MNHRQRG. A helical transmembrane segment spans residues 8–28; that stretch reads IALLMVLLILALMMVLASAMT. The Periplasmic portion of the chain corresponds to 29-326; the sequence is ERSARMYQQT…RYGIYWVADE (298 aa).

This sequence belongs to the GSP K family. Type II secretion is composed of four main components: the outer membrane complex, the inner membrane complex, the cytoplasmic secretion ATPase and the periplasm-spanning pseudopilus. Interacts with core component PulG. In terms of processing, cleaved by prepilin peptidase.

It localises to the cell inner membrane. Functionally, component of the type II secretion system required for the energy-dependent secretion of extracellular factors such as proteases and toxins from the periplasm. Plays a role in pseudopilus assembly and seems to control its length. Interacts with the pseudopilus tip complex that is critical for the recognition and binding of secretion substrates. The chain is Type II secretion system protein K (pulK) from Klebsiella pneumoniae.